The primary structure comprises 327 residues: Aspartate--ammonia ligase (327 aa).

This sequence belongs to the class-II aminoacyl-tRNA synthetase family. AsnA subfamily.

The protein resides in the cytoplasm. The enzyme catalyses L-aspartate + NH4(+) + ATP = L-asparagine + AMP + diphosphate + H(+). Its pathway is amino-acid biosynthesis; L-asparagine biosynthesis; L-asparagine from L-aspartate (ammonia route): step 1/1. This Bacillus cereus (strain G9842) protein is Aspartate--ammonia ligase.